The chain runs to 275 residues: Shikimate dehydrogenase (NADP(+)) (275 aa).

Residues 15–17 (SKS) and Thr62 contribute to the shikimate site. The active-site Proton acceptor is the Lys66. Residue Glu78 participates in NADP(+) binding. Asn87 and Asp102 together coordinate shikimate. NADP(+) contacts are provided by residues 127-131 (GAGGA), 151-156 (NRTPQK), and Met215. Tyr217 provides a ligand contact to shikimate. Position 239 (Gly239) interacts with NADP(+).

It belongs to the shikimate dehydrogenase family. Homodimer.

It catalyses the reaction shikimate + NADP(+) = 3-dehydroshikimate + NADPH + H(+). It participates in metabolic intermediate biosynthesis; chorismate biosynthesis; chorismate from D-erythrose 4-phosphate and phosphoenolpyruvate: step 4/7. Functionally, involved in the biosynthesis of the chorismate, which leads to the biosynthesis of aromatic amino acids. Catalyzes the reversible NADPH linked reduction of 3-dehydroshikimate (DHSA) to yield shikimate (SA). This chain is Shikimate dehydrogenase (NADP(+)), found in Nitrosospira multiformis (strain ATCC 25196 / NCIMB 11849 / C 71).